Consider the following 396-residue polypeptide: Arginine biosynthesis bifunctional protein ArgJ (396 aa).

Substrate contacts are provided by threonine 147, lysine 173, threonine 184, glutamate 270, asparagine 391, and serine 396. The active-site Nucleophile is the threonine 184.

This sequence belongs to the ArgJ family. As to quaternary structure, heterotetramer of two alpha and two beta chains.

It localises to the cytoplasm. The catalysed reaction is N(2)-acetyl-L-ornithine + L-glutamate = N-acetyl-L-glutamate + L-ornithine. It carries out the reaction L-glutamate + acetyl-CoA = N-acetyl-L-glutamate + CoA + H(+). Its pathway is amino-acid biosynthesis; L-arginine biosynthesis; L-ornithine and N-acetyl-L-glutamate from L-glutamate and N(2)-acetyl-L-ornithine (cyclic): step 1/1. It functions in the pathway amino-acid biosynthesis; L-arginine biosynthesis; N(2)-acetyl-L-ornithine from L-glutamate: step 1/4. Functionally, catalyzes two activities which are involved in the cyclic version of arginine biosynthesis: the synthesis of N-acetylglutamate from glutamate and acetyl-CoA as the acetyl donor, and of ornithine by transacetylation between N(2)-acetylornithine and glutamate. The protein is Arginine biosynthesis bifunctional protein ArgJ of Lactococcus lactis subsp. lactis (strain IL1403) (Streptococcus lactis).